Reading from the N-terminus, the 235-residue chain is MAKHGKRYQESRKKVDREKLYSPADALELVKDIASANFDETVDLAVKLGVDPKHADQNVRGAVVLPKGTGKEVKVIVFAKGEKAKEAEEAGADVVGADDLAEKIKGGWLDFDVAIATPDMMSVVGKLGRILGPKGLMPNPKVGTVTFELEKAVKDAKAGKIEYRVDKNGNIHLPIGKVSFPVDDLMENFKTIIDVLLRERPASAKGRYMRSVTVSSTMGPGIKVDPNQAIDLIRK.

It belongs to the universal ribosomal protein uL1 family. As to quaternary structure, part of the 50S ribosomal subunit.

Binds directly to 23S rRNA. The L1 stalk is quite mobile in the ribosome, and is involved in E site tRNA release. In terms of biological role, protein L1 is also a translational repressor protein, it controls the translation of the L11 operon by binding to its mRNA. In Halothermothrix orenii (strain H 168 / OCM 544 / DSM 9562), this protein is Large ribosomal subunit protein uL1.